The chain runs to 310 residues: MIQIARTWRVFAGGMATGFIGVVLVTAGKASADPLLPPPPIPAPVSAPATVPPVQNLTALPGGSSNRFSPAPAPAPIASPIPVGAPGSTAVPPLPPPVTPAISGTLRDHLREKGVKLEAQRPHGFKALDITLPMPPRWTQVPDPNVPDAFVVIADRLGNSVYTSNAQLVVYRLIGDFDPAEAITHGYIDSQKLLAWQTTNASMANFDGFPSSIIEGTYRENDMTLNTSRRHVIATSGADKYLVSLSVTTALSQAVTDGPATDAIVNGFQVVAHAAPAQAPAPAPGSAPVGLPGQAPGYPPAGTLTPVPPR.

An N-terminal signal peptide occupies residues 1 to 32 (MIQIARTWRVFAGGMATGFIGVVLVTAGKASA). Residues 278-310 (QAPAPAPGSAPVGLPGQAPGYPPAGTLTPVPPR) form a disordered region.

This sequence to M.leprae ML0031.

The chain is Proline-rich 28 kDa antigen (mtc28) from Mycobacterium bovis (strain ATCC BAA-935 / AF2122/97).